The chain runs to 784 residues: Transcription factor kayak (784 aa).

Low complexity-rich tracts occupy residues 97–106, 115–126, and 198–227; these read QPTQSAYQQQ, NNNNNSNNNANM, and QQQQ…QQQQ. 4 disordered regions span residues 97 to 126, 196 to 231, 358 to 404, and 421 to 464; these read QPTQ…NANM, YNQQ…HLPT, PGSD…GNGS, and SGRG…KRRI. Residues 365–378 are compositionally biased toward polar residues; sequence SNGSWNEGQLNDDQ. Positions 380 to 397 are enriched in low complexity; it reads TTDTSSAATDSTSYQNGG. Over residues 421–438 the composition is skewed to polar residues; the sequence is SGRGSGLAANSTTSNSAT. Positions 459-522 constitute a bZIP domain; sequence EEKRRIRRER…SQLEYVLQTH (64 aa). The tract at residues 461–463 is basic motif; sequence KRR. Positions 464 to 471 are leucine-zipper; sequence IRRERNKL. Serine 594 carries the phosphoserine modification. 2 disordered regions span residues 616-635 and 759-784; these read QDGA…TPAK and PTCS…LVSL.

The protein belongs to the bZIP family. Fos subfamily. Homodimer. Heterodimer with Jra. The kay-Jra heterodimer binds more stably to the AP-1 site than either of the two proteins alone.

It localises to the nucleus. Its function is as follows. Developmentally regulated transcription factor AP-1 binds and recognizes the enhancer DNA sequence: 5'-TGA[CG]TCA-3'. May play a role in the function or determination of a particular subset of cells in the developing embryo. It is able to carry out its function either independently of or in conjunction with Jra. This Drosophila mojavensis (Fruit fly) protein is Transcription factor kayak.